The primary structure comprises 390 residues: Dual-specificity RNA methyltransferase RlmN (390 aa).

The active-site Proton acceptor is E126. In terms of domain architecture, Radical SAM core spans 134–374 (TEDRGAVCLS…APVRTPRGQD (241 aa)). C141 and C379 are oxidised to a cystine. [4Fe-4S] cluster-binding residues include C148, C152, and C155. Residues 205-206 (GE), S237, 259-261 (SLH), and N336 each bind S-adenosyl-L-methionine. C379 functions as the S-methylcysteine intermediate in the catalytic mechanism.

The protein belongs to the radical SAM superfamily. RlmN family. It depends on [4Fe-4S] cluster as a cofactor.

The protein localises to the cytoplasm. The catalysed reaction is adenosine(2503) in 23S rRNA + 2 reduced [2Fe-2S]-[ferredoxin] + 2 S-adenosyl-L-methionine = 2-methyladenosine(2503) in 23S rRNA + 5'-deoxyadenosine + L-methionine + 2 oxidized [2Fe-2S]-[ferredoxin] + S-adenosyl-L-homocysteine. The enzyme catalyses adenosine(37) in tRNA + 2 reduced [2Fe-2S]-[ferredoxin] + 2 S-adenosyl-L-methionine = 2-methyladenosine(37) in tRNA + 5'-deoxyadenosine + L-methionine + 2 oxidized [2Fe-2S]-[ferredoxin] + S-adenosyl-L-homocysteine. Its function is as follows. Specifically methylates position 2 of adenine 2503 in 23S rRNA and position 2 of adenine 37 in tRNAs. m2A2503 modification seems to play a crucial role in the proofreading step occurring at the peptidyl transferase center and thus would serve to optimize ribosomal fidelity. In Acidiphilium cryptum (strain JF-5), this protein is Dual-specificity RNA methyltransferase RlmN.